The primary structure comprises 367 residues: Aspartate-semialdehyde dehydrogenase (367 aa).

Residues 10–13 (RGMV), 37–38 (TS), and glutamine 73 contribute to the NADP(+) site. Position 102 (arginine 102) interacts with phosphate. Cysteine 135 serves as the catalytic Acyl-thioester intermediate. Position 135 is an S-cysteinyl cysteine; in inhibited form (cysteine 135). Substrate is bound at residue glutamine 162. NADP(+)-binding positions include 165 to 166 (SG) and proline 193. Glutamate 241 contributes to the substrate binding site. Lysine 244 provides a ligand contact to phosphate. Arginine 267 contacts substrate. Catalysis depends on histidine 274, which acts as the Proton acceptor. Glutamine 350 contacts NADP(+).

This sequence belongs to the aspartate-semialdehyde dehydrogenase family. As to quaternary structure, homodimer.

The catalysed reaction is L-aspartate 4-semialdehyde + phosphate + NADP(+) = 4-phospho-L-aspartate + NADPH + H(+). The protein operates within amino-acid biosynthesis; L-lysine biosynthesis via DAP pathway; (S)-tetrahydrodipicolinate from L-aspartate: step 2/4. It participates in amino-acid biosynthesis; L-methionine biosynthesis via de novo pathway; L-homoserine from L-aspartate: step 2/3. It functions in the pathway amino-acid biosynthesis; L-threonine biosynthesis; L-threonine from L-aspartate: step 2/5. Catalyzes the NADPH-dependent formation of L-aspartate-semialdehyde (L-ASA) by the reductive dephosphorylation of L-aspartyl-4-phosphate. In Escherichia coli O6:H1 (strain CFT073 / ATCC 700928 / UPEC), this protein is Aspartate-semialdehyde dehydrogenase.